The sequence spans 139 residues: Large ribosomal subunit protein uL13 (139 aa).

The protein belongs to the universal ribosomal protein uL13 family. In terms of assembly, part of the 50S ribosomal subunit.

Functionally, this protein is one of the early assembly proteins of the 50S ribosomal subunit, although it is not seen to bind rRNA by itself. It is important during the early stages of 50S assembly. The protein is Large ribosomal subunit protein uL13 of Aliarcobacter butzleri (strain RM4018) (Arcobacter butzleri).